Reading from the N-terminus, the 57-residue chain is Metallothionein (57 aa).

The protein belongs to the metallothionein superfamily. Type 14 family.

In terms of biological role, this protein complexes cadmium, zinc and copper. This chain is Metallothionein (mtnA), found in Thermostichus vulcanus (Synechococcus vulcanus).